A 731-amino-acid chain; its full sequence is MNISQTDAEKLAAGCHGNPFSVLGLHEVAGKLSLRVFLPGAETVEALDPKTGRVIVTLNQTETPGLFEGTAARRKKRFAYHLRITQGAHQWQMDDPYRFGPVIGDIDEYLLGEGSHRRLWSVLGAHVITHEGVAGTHFAVWAPNAQRVSVVGEFNVWDGRRMMMRQRGATGVWEIFVPGIGEGEIYKYEIIAPDGSLLPQKADPVGFGAEHPPRTGSVVRKIDGYAWDDAQWMTRRADVQRIDQPVSIYEVHLGSWRRVPEDGNRPLSYVELADQLVAYVKDMGFTHMEVMPVSEFPFDGSWGYQPIGLFAPTIRHGTLDEFRALVAACHRENIGVILDWVPGHFPEDAHGLGRFDGTALYEHADRKEGFHPDWNTLVYNYGRAEVANYLAANALYWLQEHHVDGLRVDAVASMLYRDYSRKDGEWIPNRDGGRENYEAISFLQKVNTESYGEVPGIMTIAEESTAFPGVSAPVDAGGLGFGFKWNMGWMNDTLQYMQQDPIHRKYHHHEMTFGLHYAFSENFILPLSHDEVVHGKGSLLDKMPGQGDDKFANLRAYYGFMWGHPGKKLLFMGCEFAQGVEWNHDSSLDWHLLDHPQHRGMQNLVRDLNALYRENAALHGLDCAAQGFEWIDENNAEASVLAWLRHGPDGGAPMLVVSNFTPVERSHYRLGVPQAGRWVERLNTNADCYGGTGLGNLGGVQSADIAAAGRPFSIDVVLPPLTTLFFQLDDG.

The active-site Nucleophile is Asp-409. Residue Glu-462 is the Proton donor of the active site.

Belongs to the glycosyl hydrolase 13 family. GlgB subfamily. Monomer.

The catalysed reaction is Transfers a segment of a (1-&gt;4)-alpha-D-glucan chain to a primary hydroxy group in a similar glucan chain.. It functions in the pathway glycan biosynthesis; glycogen biosynthesis. Catalyzes the formation of the alpha-1,6-glucosidic linkages in glycogen by scission of a 1,4-alpha-linked oligosaccharide from growing alpha-1,4-glucan chains and the subsequent attachment of the oligosaccharide to the alpha-1,6 position. The protein is 1,4-alpha-glucan branching enzyme GlgB of Roseobacter denitrificans (strain ATCC 33942 / OCh 114) (Erythrobacter sp. (strain OCh 114)).